Consider the following 92-residue polypeptide: Small ribosomal subunit protein uS19 (92 aa).

This sequence belongs to the universal ribosomal protein uS19 family.

In terms of biological role, protein S19 forms a complex with S13 that binds strongly to the 16S ribosomal RNA. The polypeptide is Small ribosomal subunit protein uS19 (Nostoc punctiforme (strain ATCC 29133 / PCC 73102)).